A 298-amino-acid chain; its full sequence is Phospholipase A1 (298 aa).

Residues C4 and C87 are joined by a disulfide bond. N88 and N122 each carry an N-linked (GlcNAc...) asparagine glycan. The active-site Nucleophile is S134. D162 (charge relay system) is an active-site residue. 2 cysteine pairs are disulfide-bonded: C173-C178 and C216-C225. Catalysis depends on H227, which acts as the Charge relay system. Cystine bridges form between C242/C266, C243/C291, and C259/C264.

The protein belongs to the AB hydrolase superfamily. Lipase family. In terms of tissue distribution, expressed by the venom gland.

Its subcellular location is the secreted. It catalyses the reaction a 1,2-diacyl-sn-glycero-3-phosphocholine + H2O = a 2-acyl-sn-glycero-3-phosphocholine + a fatty acid + H(+). Functionally, catalyzes the hydrolysis of phosphatidylcholine with phospholipase A1 activity. May act as an allergen and induce hemolytic activity. This Vespula squamosa (Southern yellow jacket) protein is Phospholipase A1.